The sequence spans 173 residues: Disulfide bond formation protein B 2 (173 aa).

Residues 1–9 (MSLAGSRLL) lie on the Cytoplasmic side of the membrane. A helical membrane pass occupies residues 10–26 (FSLVFLVGALASWAAFN). The Periplasmic portion of the chain corresponds to 27–44 (LQTGGGLESCSLWSVQRL). Residues 45 to 61 (LLLALGGVNLLAVIQGP) traverse the membrane as a helical segment. The Cytoplasmic segment spans residues 62 to 67 (GRVGRA). Residues 68–85 (VYWGLNLLLGLLGVVTAG) form a helical membrane-spanning segment. Residues 86-142 (RHVLLQNIPSEQLLACLPDMSFMLRQLSWWQALKLTFMGTSDCAEVTWTLLDMSLPE) lie on the Periplasmic side of the membrane. An intrachain disulfide couples cysteine 101 to cysteine 128. The helical transmembrane segment at 143-161 (WSLLFFVIMLIFSGYRLWR) threads the bilayer. Residues 162–173 (QLRGARKAVALP) lie on the Cytoplasmic side of the membrane.

This sequence belongs to the DsbB family.

The protein localises to the cell inner membrane. Functionally, required for disulfide bond formation in some periplasmic proteins. Acts by oxidizing the DsbA protein. In Pseudomonas fluorescens (strain ATCC BAA-477 / NRRL B-23932 / Pf-5), this protein is Disulfide bond formation protein B 2.